A 220-amino-acid polypeptide reads, in one-letter code: Deoxyribose-phosphate aldolase (220 aa).

D89 acts as the Proton donor/acceptor in catalysis. K151 (schiff-base intermediate with acetaldehyde) is an active-site residue. The active-site Proton donor/acceptor is the K180.

Belongs to the DeoC/FbaB aldolase family. DeoC type 1 subfamily.

Its subcellular location is the cytoplasm. The enzyme catalyses 2-deoxy-D-ribose 5-phosphate = D-glyceraldehyde 3-phosphate + acetaldehyde. The protein operates within carbohydrate degradation; 2-deoxy-D-ribose 1-phosphate degradation; D-glyceraldehyde 3-phosphate and acetaldehyde from 2-deoxy-alpha-D-ribose 1-phosphate: step 2/2. In terms of biological role, catalyzes a reversible aldol reaction between acetaldehyde and D-glyceraldehyde 3-phosphate to generate 2-deoxy-D-ribose 5-phosphate. The chain is Deoxyribose-phosphate aldolase from Thermus thermophilus (strain ATCC BAA-163 / DSM 7039 / HB27).